The following is a 420-amino-acid chain: Phospholipase A1-II 3 (420 aa).

The N-terminal stretch at 1–21 is a signal peptide; that stretch reads MCCFLLVSVLLATTLTDVASA. N-linked (GlcNAc...) asparagine glycosylation occurs at Asn-231. Ser-240 serves as the catalytic Acyl-ester intermediate. The active-site Charge relay system is Ser-240. An N-linked (GlcNAc...) asparagine glycan is attached at Asn-294. Catalysis depends on charge relay system residues Asp-305 and His-343. The stretch at 367–388 forms a coiled coil; sequence VVDRDLALVNKEVDALRDEYQV. N-linked (GlcNAc...) asparagine glycosylation is present at Asn-403.

The protein belongs to the AB hydrolase superfamily. Lipase family.

Its subcellular location is the secreted. In terms of biological role, acylhydrolase that catalyzes the hydrolysis of phospholipids at the sn-1 position. This Oryza sativa subsp. japonica (Rice) protein is Phospholipase A1-II 3.